The primary structure comprises 147 residues: D-aminoacyl-tRNA deacylase (147 aa).

The Gly-cisPro motif, important for rejection of L-amino acids motif lies at Gly136–Pro137.

The protein belongs to the DTD family. As to quaternary structure, homodimer.

It localises to the cytoplasm. It carries out the reaction glycyl-tRNA(Ala) + H2O = tRNA(Ala) + glycine + H(+). The enzyme catalyses a D-aminoacyl-tRNA + H2O = a tRNA + a D-alpha-amino acid + H(+). Functionally, an aminoacyl-tRNA editing enzyme that deacylates mischarged D-aminoacyl-tRNAs. Also deacylates mischarged glycyl-tRNA(Ala), protecting cells against glycine mischarging by AlaRS. Acts via tRNA-based rather than protein-based catalysis; rejects L-amino acids rather than detecting D-amino acids in the active site. By recycling D-aminoacyl-tRNA to D-amino acids and free tRNA molecules, this enzyme counteracts the toxicity associated with the formation of D-aminoacyl-tRNA entities in vivo and helps enforce protein L-homochirality. The polypeptide is D-aminoacyl-tRNA deacylase (Streptococcus suis (strain 98HAH33)).